The sequence spans 303 residues: UDP-3-O-acyl-N-acetylglucosamine deacetylase (303 aa).

His-78, His-237, and Asp-241 together coordinate Zn(2+). Catalysis depends on His-264, which acts as the Proton donor.

This sequence belongs to the LpxC family. It depends on Zn(2+) as a cofactor.

The enzyme catalyses a UDP-3-O-[(3R)-3-hydroxyacyl]-N-acetyl-alpha-D-glucosamine + H2O = a UDP-3-O-[(3R)-3-hydroxyacyl]-alpha-D-glucosamine + acetate. Its pathway is glycolipid biosynthesis; lipid IV(A) biosynthesis; lipid IV(A) from (3R)-3-hydroxytetradecanoyl-[acyl-carrier-protein] and UDP-N-acetyl-alpha-D-glucosamine: step 2/6. In terms of biological role, catalyzes the hydrolysis of UDP-3-O-myristoyl-N-acetylglucosamine to form UDP-3-O-myristoylglucosamine and acetate, the committed step in lipid A biosynthesis. In Pseudomonas entomophila (strain L48), this protein is UDP-3-O-acyl-N-acetylglucosamine deacetylase.